The primary structure comprises 342 residues: Manganese-dependent ADP-ribose/CDP-alcohol diphosphatase (342 aa).

The Zn(2+) site is built by Asp18, Gln20, Asp67, Asn103, His239, His276, and His278.

Belongs to the ADPRibase-Mn family. Monomer. Mg(2+) is required as a cofactor.

It carries out the reaction CDP-choline + H2O = phosphocholine + CMP + 2 H(+). The enzyme catalyses ADP-D-ribose + H2O = D-ribose 5-phosphate + AMP + 2 H(+). The catalysed reaction is CDP-glycerol + H2O = sn-glycerol 3-phosphate + CMP + 2 H(+). Its function is as follows. Hydrolyzes ADP-ribose, IDP-ribose, CDP-glycerol, CDP-choline and CDP-ethanolamine, but not other non-reducing ADP-sugars or CDP-glucose. This Xenopus tropicalis (Western clawed frog) protein is Manganese-dependent ADP-ribose/CDP-alcohol diphosphatase (adprm).